Reading from the N-terminus, the 400-residue chain is Keratin, type I cytoskeletal 19 (400 aa).

A head region spans residues 1–79; the sequence is MTSYSYRQSS…TASDGLLAGN (79 aa). Arg7 carries the omega-N-methylarginine modification. Phosphoserine occurs at positions 14 and 22. At Arg24 the chain carries Asymmetric dimethylarginine; alternate. Arg24 is subject to Omega-N-methylarginine; alternate. Arg32 is modified (omega-N-methylarginine). Phosphoserine is present on residues Ser35 and Ser40. Arg43 and Arg51 each carry omega-N-methylarginine. Residues Ser57 and Ser72 each carry the phosphoserine modification. Residues 80 to 115 are coil 1A; sequence EKLTMQNLNDRLASYLDKVRALEAANGELEVKIRDW. The region spanning 80 to 391 is the IF rod domain; sequence EKLTMQNLND…SLLEGQEDHY (312 aa). Positions 116-133 are linker 1; the sequence is YQKQGPGPSRDYSHYYTT. Positions 134–225 are coil 1B; that stretch reads IQDLRDKILG…KNHEEEISTL (92 aa). The interval 226 to 248 is linker 12; that stretch reads RGQVGGQVSVEVDSAPGTDLAKI. Positions 244-390 are necessary for interaction with PNN; the sequence is DLAKILSDMR…RSLLEGQEDH (147 aa). Residues 249-387 form a coil 2 region; it reads LSDMRSQYEV…ATYRSLLEGQ (139 aa). Thr323 carries the phosphothreonine modification. The tract at residues 388-400 is rod-like helical tail; that stretch reads EDHYSNLSASKVL. Phosphotyrosine is present on Tyr391. Ser395 carries the phosphoserine modification.

Belongs to the intermediate filament family. In terms of assembly, heterotetramer of two type I and two type II keratins. Interacts with PNN and the actin-binding domain of DMD.

Functionally, involved in the organization of myofibers. Together with KRT8, helps to link the contractile apparatus to dystrophin at the costameres of striated muscle. In Pongo abelii (Sumatran orangutan), this protein is Keratin, type I cytoskeletal 19.